We begin with the raw amino-acid sequence, 459 residues long: Anthocyanidin 3-O-glucoside 2''-O-glucosyltransferase (459 aa).

Residue His20 is the Proton acceptor of the active site. Residue His20 participates in an anthocyanidin binding. Asp117 serves as the catalytic Charge relay. Thr138, Val335, Gln337, His352, Trp355, Ser357, and Glu360 together coordinate UDP-alpha-D-glucose. Residue Gly375 coordinates an anthocyanidin. UDP-alpha-D-glucose-binding residues include Asp376 and Gln377.

This sequence belongs to the UDP-glycosyltransferase family. Mainly expressed in the petals and tubes of flower buds at around 24 hours before flower opening.

The catalysed reaction is an anthocyanidin 3-O-beta-D-glucoside + UDP-alpha-D-glucose = an anthocyanidin 3-O-sophoroside + UDP + 2 H(+). It participates in pigment biosynthesis; anthocyanin biosynthesis. In terms of biological role, glycosyltransferase that mediates the glucosylation of anthocyanidin 3-O-glucosides to yield anthocyanidin 3-O-sophorosides. 3-O-sophoroside derivatives are required for the bright blue or red color of flowers. This is Anthocyanidin 3-O-glucoside 2''-O-glucosyltransferase (3GGT) from Ipomoea nil (Japanese morning glory).